A 475-amino-acid polypeptide reads, in one-letter code: Glycogen synthase (475 aa).

K15 serves as a coordination point for ADP-alpha-D-glucose.

The protein belongs to the glycosyltransferase 1 family. Bacterial/plant glycogen synthase subfamily.

It carries out the reaction [(1-&gt;4)-alpha-D-glucosyl](n) + ADP-alpha-D-glucose = [(1-&gt;4)-alpha-D-glucosyl](n+1) + ADP + H(+). It participates in glycan biosynthesis; glycogen biosynthesis. In terms of biological role, synthesizes alpha-1,4-glucan chains using ADP-glucose. The polypeptide is Glycogen synthase (Clostridium kluyveri (strain ATCC 8527 / DSM 555 / NBRC 12016 / NCIMB 10680 / K1)).